The primary structure comprises 422 residues: MAKFIDEIKLTLIAGKGGDGIISFRREAHVDKGGPDGGDGGKGGNIYFVGDKGKNTLLSLYGNKQISAEDGINGGPKNLYGATGKSTYVKVPIGTMVFKNDKLVADIIEEKEYLVAQGGIGGRGNAKFKSNRNTAPRICENGTPGEKYLAHIVLKVMSDVGIIGKPSAGKSTLLSAISNAKAKIAEYEFTTLVPQLGLVKYHDHSFTVADLPGLIKGASEGKGLGIQFLRHIERCRVVVQIIDFGSEEKNPIEDFEIINKELEEYSKKLASKPKVVVANKSDLQGFKERVNIFKAKYPDVEIVEISAIERQNLEELKGKIWKILEEAKLLPADEEEETEENVEIKLEDDYKISNPYAGFFEITGPKIEQIYHKIPLVSYDNLIRFNTMLKKIGVWDDLLKYDIKPGDTVRILDYEFEWDGEF.

Positions 2-157 constitute an Obg domain; that stretch reads AKFIDEIKLT…YLAHIVLKVM (156 aa). The OBG-type G domain maps to 158-325; it reads SDVGIIGKPS…LKGKIWKILE (168 aa). Residues 164 to 171, 189 to 193, 210 to 213, 279 to 282, and 306 to 308 each bind GTP; these read GKPSAGKS, FTTLV, DLPG, NKSD, and SAI. The Mg(2+) site is built by S171 and T191. An OCT domain is found at 334 to 420; it reads EEEETEENVE…ILDYEFEWDG (87 aa).

Belongs to the TRAFAC class OBG-HflX-like GTPase superfamily. OBG GTPase family. As to quaternary structure, monomer. Requires Mg(2+) as cofactor.

Its subcellular location is the cytoplasm. In terms of biological role, an essential GTPase which binds GTP, GDP and possibly (p)ppGpp with moderate affinity, with high nucleotide exchange rates and a fairly low GTP hydrolysis rate. Plays a role in control of the cell cycle, stress response, ribosome biogenesis and in those bacteria that undergo differentiation, in morphogenesis control. This is GTPase Obg from Mycoplasmopsis agalactiae (strain NCTC 10123 / CIP 59.7 / PG2) (Mycoplasma agalactiae).